The chain runs to 319 residues: Putative metal ion transporter YfjQ (319 aa).

The next 2 membrane-spanning stretches (helical) occupy residues 254 to 274 (IMMT…IAGV) and 290 to 310 (GYFA…IWFV).

The protein belongs to the CorA metal ion transporter (MIT) (TC 1.A.35) family.

It is found in the cell membrane. This Bacillus subtilis (strain 168) protein is Putative metal ion transporter YfjQ (yfjQ).